Reading from the N-terminus, the 279-residue chain is 3-methyl-2-oxobutanoate hydroxymethyltransferase (279 aa).

Mg(2+) is bound by residues aspartate 43 and aspartate 82. Residues 43–44 (DS), aspartate 82, and lysine 112 each bind 3-methyl-2-oxobutanoate. A Mg(2+)-binding site is contributed by glutamate 114. Residue glutamate 181 is the Proton acceptor of the active site.

It belongs to the PanB family. Homodecamer; pentamer of dimers. Mg(2+) serves as cofactor.

The protein localises to the cytoplasm. It carries out the reaction 3-methyl-2-oxobutanoate + (6R)-5,10-methylene-5,6,7,8-tetrahydrofolate + H2O = 2-dehydropantoate + (6S)-5,6,7,8-tetrahydrofolate. Its pathway is cofactor biosynthesis; (R)-pantothenate biosynthesis; (R)-pantoate from 3-methyl-2-oxobutanoate: step 1/2. Its function is as follows. Catalyzes the reversible reaction in which hydroxymethyl group from 5,10-methylenetetrahydrofolate is transferred onto alpha-ketoisovalerate to form ketopantoate. The sequence is that of 3-methyl-2-oxobutanoate hydroxymethyltransferase from Geobacillus thermodenitrificans (strain NG80-2).